Consider the following 545-residue polypeptide: CTP synthase (545 aa).

Residues 1–266 (MTKNYIFITG…DDYICNYFKL (266 aa)) are amidoligase domain. Position 14 (Ser-14) interacts with CTP. Ser-14 is a binding site for UTP. ATP contacts are provided by residues 15-20 (SLGKGI) and Asp-72. Residues Asp-72 and Glu-140 each contribute to the Mg(2+) site. CTP contacts are provided by residues 147–149 (DIE), 187–192 (KTKPTQ), and Lys-223. UTP contacts are provided by residues 187–192 (KTKPTQ) and Lys-223. 239-241 (KDV) contributes to the ATP binding site. The 253-residue stretch at 291 to 543 (VIGIIGKYIK…IKSAGKHKKN (253 aa)) folds into the Glutamine amidotransferase type-1 domain. Residue Gly-352 coordinates L-glutamine. Cys-379 (nucleophile; for glutamine hydrolysis) is an active-site residue. L-glutamine contacts are provided by residues 380–383 (LGMQ), Glu-403, and Arg-471. Active-site residues include His-516 and Glu-518.

This sequence belongs to the CTP synthase family. Homotetramer.

The catalysed reaction is UTP + L-glutamine + ATP + H2O = CTP + L-glutamate + ADP + phosphate + 2 H(+). It catalyses the reaction L-glutamine + H2O = L-glutamate + NH4(+). It carries out the reaction UTP + NH4(+) + ATP = CTP + ADP + phosphate + 2 H(+). The protein operates within pyrimidine metabolism; CTP biosynthesis via de novo pathway; CTP from UDP: step 2/2. Allosterically activated by GTP, when glutamine is the substrate; GTP has no effect on the reaction when ammonia is the substrate. The allosteric effector GTP functions by stabilizing the protein conformation that binds the tetrahedral intermediate(s) formed during glutamine hydrolysis. Inhibited by the product CTP, via allosteric rather than competitive inhibition. Catalyzes the ATP-dependent amination of UTP to CTP with either L-glutamine or ammonia as the source of nitrogen. Regulates intracellular CTP levels through interactions with the four ribonucleotide triphosphates. This chain is CTP synthase, found in Buchnera aphidicola subsp. Acyrthosiphon pisum (strain 5A).